The chain runs to 354 residues: DNA integrity scanning protein DisA (354 aa).

A DAC domain is found at 6–144 (EKELKSILKL…GHIKYVLRDS (139 aa)). ATP is bound by residues Gly-73, Leu-91, and 104–108 (TRHRT).

This sequence belongs to the DisA family. As to quaternary structure, homooctamer. Requires Mg(2+) as cofactor.

It catalyses the reaction 2 ATP = 3',3'-c-di-AMP + 2 diphosphate. Functionally, participates in a DNA-damage check-point that is active prior to asymmetric division when DNA is damaged. DisA forms globular foci that rapidly scan along the chromosomes during sporulation, searching for lesions. When a lesion is present, DisA pauses at the lesion site. This triggers a cellular response that culminates in a temporary block in sporulation initiation. Its function is as follows. Also has diadenylate cyclase activity, catalyzing the condensation of 2 ATP molecules into cyclic di-AMP (c-di-AMP). c-di-AMP acts as a signaling molecule that couples DNA integrity with progression of sporulation. The rise in c-di-AMP level generated by DisA while scanning the chromosome, operates as a positive signal that advances sporulation; upon encountering a lesion, the DisA focus arrests at the damaged site and halts c-di-AMP synthesis. This is DNA integrity scanning protein DisA from Clostridium kluyveri (strain ATCC 8527 / DSM 555 / NBRC 12016 / NCIMB 10680 / K1).